Consider the following 424-residue polypeptide: DNA primase DnaG (424 aa).

The Toprim domain maps to 171 to 245 (DDIIVVEGRA…DVDFVARAPP (75 aa)). Mg(2+)-binding residues include E177, D219, and D221.

The protein belongs to the archaeal DnaG primase family. In terms of assembly, forms a ternary complex with MCM helicase and DNA. Requires Mg(2+) as cofactor.

The enzyme catalyses ssDNA + n NTP = ssDNA/pppN(pN)n-1 hybrid + (n-1) diphosphate.. In terms of biological role, RNA polymerase that catalyzes the synthesis of short RNA molecules used as primers for DNA polymerase during DNA replication. The polypeptide is DNA primase DnaG (Methanocaldococcus jannaschii (strain ATCC 43067 / DSM 2661 / JAL-1 / JCM 10045 / NBRC 100440) (Methanococcus jannaschii)).